The sequence spans 334 residues: Serine/Arginine-related protein 53 (334 aa).

Positions 1–13 (MGRRSSDTEEESR) are enriched in basic and acidic residues. Disordered regions lie at residues 1-179 (MGRR…HLPP), 201-220 (LKAK…EDQA), and 243-290 (QTFR…SIPT). Composition is skewed to basic residues over residues 14-24 (SKRKKKHRRRS) and 35-50 (YSRK…KSRS). Residues 51-62 (WSRDLQPRSHSY) show a composition bias toward basic and acidic residues. Residues 78-118 (SRRKRSRSRSRGRGKSYRVQRSRSKSRTRRSRSRPRLRSHS) are compositionally biased toward basic residues. 3 stretches are compositionally biased toward basic and acidic residues: residues 132-166 (RSRD…KRGE), 201-218 (LKAK…KEED), and 247-259 (SSKE…EPSE). The stretch at 180-236 (AEQAKARLQLVLEAAAKADEALKAKERNEEEAKRRKEEDQATLVEQVKRVKEIEAIE) forms a coiled coil.

In terms of assembly, interacts (via Arg/Ser-rich domain) with LUC7L3, RBM39 and RSF1. Post-translationally, phosphorylated. As to expression, widely expressed. Expressed in brain, spinal cord, cerebellum.

The protein localises to the nucleus. It is found in the nucleus speckle. It localises to the cytoplasm. Has a role in alternative splicing and transcription regulation. Involved in both constitutive and alternative pre-mRNA splicing. May have a role in the recognition of the 3' splice site during the second step of splicing. The polypeptide is Serine/Arginine-related protein 53 (RSRC1) (Homo sapiens (Human)).